The sequence spans 622 residues: Sodium-dependent serotonin transporter (622 aa).

The tract at residues Met1–Pro53 is disordered. The Cytoplasmic segment spans residues Met1 to Glu82. The span at Asn32 to Gly42 shows a compositional bias: acidic residues. Transmembrane regions (helical) follow at residues Phe83–Ile103, Ala111–Met130, and Gly155–Ile175. Positions 89, 91, 92, and 96 each coordinate Na(+). At Gly176–Lys244 the chain is on the extracellular side. Residues Cys195 and Cys204 are joined by a disulfide bond. An N-linked (GlcNAc...) asparagine glycan is attached at Asn211. A run of 5 helical transmembrane segments spans residues Pro245–Trp263, Val272–Val289, Ile325–Tyr342, Leu354–Leu375, and Met408–Leu427. Na(+) is bound by residues Ser328, Asn360, Leu425, Asp428, and Ser429. The next 4 helical transmembrane spans lie at Leu455–Thr473, Gly489–Val509, Ile530–Met549, and Val568–Tyr586. Over Lys587 to Val622 the chain is Cytoplasmic.

The protein belongs to the sodium:neurotransmitter symporter (SNF) (TC 2.A.22) family. Expression is specific to cell bodies in the ventral ganglion of the embryonic and larval nervous system.

It is found in the cell membrane. Its function is as follows. Terminates the action of serotonin by its high affinity sodium-dependent reuptake into presynaptic terminals. The sequence is that of Sodium-dependent serotonin transporter (SerT) from Drosophila melanogaster (Fruit fly).